Reading from the N-terminus, the 260-residue chain is Type III pantothenate kinase (260 aa).

ATP is bound at residue 6 to 13 (DAGNTRTK). Substrate-binding positions include Tyr-88 and 95–98 (GVDR). The active-site Proton acceptor is the Asp-97. Ser-121 is an ATP binding site. Position 184 (Thr-184) interacts with substrate.

This sequence belongs to the type III pantothenate kinase family. Homodimer. The cofactor is NH4(+). K(+) serves as cofactor.

Its subcellular location is the cytoplasm. It catalyses the reaction (R)-pantothenate + ATP = (R)-4'-phosphopantothenate + ADP + H(+). It participates in cofactor biosynthesis; coenzyme A biosynthesis; CoA from (R)-pantothenate: step 1/5. Functionally, catalyzes the phosphorylation of pantothenate (Pan), the first step in CoA biosynthesis. The polypeptide is Type III pantothenate kinase (Saccharophagus degradans (strain 2-40 / ATCC 43961 / DSM 17024)).